Here is a 58-residue protein sequence, read N- to C-terminus: Bowman-Birk type wound-induced trypsin inhibitor (58 aa).

7 cysteine pairs are disulfide-bonded: cysteine 4-cysteine 57, cysteine 5-cysteine 20, cysteine 8-cysteine 53, cysteine 10-cysteine 18, cysteine 27-cysteine 34, cysteine 31-cysteine 46, and cysteine 36-cysteine 44.

Belongs to the Bowman-Birk serine protease inhibitor family.

The sequence is that of Bowman-Birk type wound-induced trypsin inhibitor from Medicago sativa (Alfalfa).